Here is a 531-residue protein sequence, read N- to C-terminus: Acid-sensing ion channel 3 (531 aa).

Residues 1–43 (MKPTSGPEEARRPASDIRVFASNCSMHGLGHVFGPGSLSLRRG) are Cytoplasmic-facing. Residues 44–61 (MWAAAVVLSVATFLYQVA) form a helical membrane-spanning segment. The Extracellular portion of the chain corresponds to 62–441 (ERVRYYREFH…SELLGDIGGQ (380 aa)). 7 disulfides stabilise this stretch: Cys92-Cys186, Cys164-Cys171, Cys282-Cys370, Cys315-Cys366, Cys319-Cys364, Cys328-Cys350, and Cys330-Cys342. N-linked (GlcNAc...) asparagine glycosylation is present at Asn175. The disordered stretch occupies residues 285–307 (ASLNPNYEPEPSDPLGSPSPSPS). N-linked (GlcNAc...) asparagine glycosylation is present at Asn398. The helical transmembrane segment at 442–460 (MGLFIGASLLTILEILDYL) threads the bilayer. The GAS motif; ion selectivity filter motif lies at 447 to 449 (GAS). Over 461-531 (CEVFRDKVLG…HRTCYLVTQL (71 aa)) the chain is Cytoplasmic. A PDZ-binding motif is present at residues 528-531 (VTQL).

It belongs to the amiloride-sensitive sodium channel (TC 1.A.6) family. ASIC3 subfamily. As to quaternary structure, can form homotrimeric channels. Heterotrimer; forms functional heterotrimers producing channel with different properties. Forms heterotrimers with ASIC2; gives rise to a biphasic current with a sustained current which discriminates poorly between Na(+) and K(+). Interacts with STOM; inhibits ASIC3 acid-evoked current. Interacts with LIN7B (via PDZ domain); increases ASIC3 expression at the plasma membrane. Interacts with MAGI1 (via PDZ domain); probably regulates ASIC3. Interacts with GOPC (via PDZ domain); probably regulates ASIC3. Interacts with DLG4 (via PDZ domain); reduces ASIC3 expression at the plasma membrane. Expressed by sensory neurons. Strongly expressed in brain, spinal cord, lung, lymph nodes, kidney, pituitary, heart and testis.

It is found in the cell membrane. The protein localises to the cytoplasm. The enzyme catalyses Na(+)(in) = Na(+)(out). It catalyses the reaction K(+)(in) = K(+)(out). It carries out the reaction Ca(2+)(in) = Ca(2+)(out). With respect to regulation, inhibited by the diuretic drug amiloride. Inhibited by the diuretic drug triamterene. Potentiated by the vertebrate neuropeptide FF (NPFF) and the related FMRFamide. Specifically and reversibly inhibited by the a sea anemone toxin APETx2. Functionally, forms pH-gated heterotrimeric sodium channels that act as postsynaptic excitatory receptors in the nervous system. Upon extracellular acidification, these channels generate a biphasic current with a fast inactivating and a slow sustained phase. ASIC3 is more sensitive to protons and gates between closed, open, and desensitized states faster than other ASICs. Displays high selectivity for sodium ions but can also permit the permeation of other cations. As a neuronal acid sensor, probably contributes to mechanoreception, acid nociception, and heat nociception. By forming heterotrimeric channels with ASIC2, generates a biphasic current with a fast inactivating and a slow sustained phase, which in sensory neurons is proposed to mediate the pain induced by acidosis that occurs in ischemic, damaged or inflamed tissues. The protein is Acid-sensing ion channel 3 of Homo sapiens (Human).